Here is a 554-residue protein sequence, read N- to C-terminus: Hydroxylamine reductase (554 aa).

C3, C6, C18, and C25 together coordinate [2Fe-2S] cluster. Residues H252, E276, C320, C408, C436, C461, E495, and K497 each contribute to the hybrid [4Fe-2O-2S] cluster site. Position 408 is a cysteine persulfide (C408).

The protein belongs to the HCP family. [2Fe-2S] cluster serves as cofactor. It depends on hybrid [4Fe-2O-2S] cluster as a cofactor.

The protein resides in the cytoplasm. The enzyme catalyses A + NH4(+) + H2O = hydroxylamine + AH2 + H(+). Functionally, catalyzes the reduction of hydroxylamine to form NH(3) and H(2)O. The protein is Hydroxylamine reductase of Shewanella putrefaciens (strain CN-32 / ATCC BAA-453).